The chain runs to 480 residues: MKVLFAASEGVPFVKTGGLADVIGSLPRHLKSQGFDVRVILPKYSDIPICFREQMLKLTDFMVPLGWRNLYCGIEKLKYDGIIFYFIDNEFYFKRQGLYGFEDDAERFAFFDRAILEVLPRIDFQPNIIHCHDWHTGMISTFLKSHYRNNPFYQDIRTVFTIHNLQYQGVFPRTILQNVLGLGNEYFGLDGLEFYGQVSFMKGGVNYSDILTTVSETYAEEIQLPQYGEQLDGLLRHQKRKLHGILNGIDIDIYNPDTDPHICVNFSRETVDKKHINKESLQKILCLPMRPDVPVFGMVSRLVSQKGLELIGSVLDDILALDVQLVVLGSGEKHYEDMFRSASRRYPDKVSVNIMFGNTLAHRIYAGSDIYLMPSAFEPCGLSQMIALRYGSIPIVRETGGLRDTIQPYNEYTGEGNGFSFTHFNAQDFLYTLKRTISFYRQRNIWSIIVSNAMQCDFSWYKSAQKYQDLYKKLLFNGDR.

Lysine 15 is a binding site for ADP-alpha-D-glucose.

It belongs to the glycosyltransferase 1 family. Bacterial/plant glycogen synthase subfamily.

The enzyme catalyses [(1-&gt;4)-alpha-D-glucosyl](n) + ADP-alpha-D-glucose = [(1-&gt;4)-alpha-D-glucosyl](n+1) + ADP + H(+). It functions in the pathway glycan biosynthesis; glycogen biosynthesis. Synthesizes alpha-1,4-glucan chains using ADP-glucose. The protein is Glycogen synthase of Desulforamulus reducens (strain ATCC BAA-1160 / DSM 100696 / MI-1) (Desulfotomaculum reducens).